The primary structure comprises 493 residues: Probable cytosol aminopeptidase (493 aa).

Mn(2+) is bound by residues lysine 256 and aspartate 261. Lysine 268 is an active-site residue. 3 residues coordinate Mn(2+): aspartate 279, aspartate 338, and glutamate 340. Arginine 342 is an active-site residue.

This sequence belongs to the peptidase M17 family. Requires Mn(2+) as cofactor.

It is found in the cytoplasm. The enzyme catalyses Release of an N-terminal amino acid, Xaa-|-Yaa-, in which Xaa is preferably Leu, but may be other amino acids including Pro although not Arg or Lys, and Yaa may be Pro. Amino acid amides and methyl esters are also readily hydrolyzed, but rates on arylamides are exceedingly low.. It catalyses the reaction Release of an N-terminal amino acid, preferentially leucine, but not glutamic or aspartic acids.. Presumably involved in the processing and regular turnover of intracellular proteins. Catalyzes the removal of unsubstituted N-terminal amino acids from various peptides. This chain is Probable cytosol aminopeptidase, found in Phytoplasma australiense.